We begin with the raw amino-acid sequence, 90 residues long: Small ribosomal subunit protein uS15c (90 aa).

This sequence belongs to the universal ribosomal protein uS15 family. In terms of assembly, part of the 30S ribosomal subunit.

The protein localises to the plastid. The protein resides in the chloroplast. This Phaseolus vulgaris (Kidney bean) protein is Small ribosomal subunit protein uS15c (rps15).